The primary structure comprises 153 residues: Nucleoside diphosphate kinase 3 (153 aa).

Residues lysine 11, phenylalanine 59, arginine 87, threonine 93, arginine 104, and asparagine 114 each coordinate ATP. Histidine 117 functions as the Pros-phosphohistidine intermediate in the catalytic mechanism.

This sequence belongs to the NDK family. As to quaternary structure, homohexamer. Mg(2+) is required as a cofactor.

It is found in the plastid. The protein resides in the chloroplast thylakoid lumen. It carries out the reaction a 2'-deoxyribonucleoside 5'-diphosphate + ATP = a 2'-deoxyribonucleoside 5'-triphosphate + ADP. The catalysed reaction is a ribonucleoside 5'-diphosphate + ATP = a ribonucleoside 5'-triphosphate + ADP. Its function is as follows. Major role in the synthesis of nucleoside triphosphates other than ATP. The ATP gamma phosphate is transferred to the NDP beta phosphate via a ping-pong mechanism, using a phosphorylated active-site intermediate. Shows the highest specificity towards GDP. This is Nucleoside diphosphate kinase 3 from Spinacia oleracea (Spinach).